The following is a 94-amino-acid chain: UPF0235 protein Dred_0717 (94 aa).

The protein belongs to the UPF0235 family.

The protein is UPF0235 protein Dred_0717 of Desulforamulus reducens (strain ATCC BAA-1160 / DSM 100696 / MI-1) (Desulfotomaculum reducens).